Here is a 591-residue protein sequence, read N- to C-terminus: Phosphoglucan phosphatase LSF1, chloroplastic (591 aa).

The N-terminal 61 residues, 1-61, are a transit peptide targeting the chloroplast; the sequence is MAFLQQISGL…RRRRVVLRVV (61 aa). A Tyrosine-protein phosphatase domain is found at 291–453; sequence RYSKITEQIY…VDDGKHDGTP (163 aa). Cys390 acts as the Phosphocysteine intermediate in catalysis. 390–396 is a substrate binding site; it reads CTTGFDR.

The protein localises to the plastid. The protein resides in the chloroplast. In terms of biological role, starch granule-associated phosphoglucan phosphatase involved in the control of starch accumulation. Participates in the regulation of the initial steps of starch degradation at the granule surface. May release a different set of phosphate groups from those removed by DSP4. The chain is Phosphoglucan phosphatase LSF1, chloroplastic (LSF1) from Arabidopsis thaliana (Mouse-ear cress).